The sequence spans 857 residues: Alanine--tRNA ligase (857 aa).

His556, His560, Cys658, and His662 together coordinate Zn(2+).

It belongs to the class-II aminoacyl-tRNA synthetase family. The cofactor is Zn(2+).

It is found in the cytoplasm. It catalyses the reaction tRNA(Ala) + L-alanine + ATP = L-alanyl-tRNA(Ala) + AMP + diphosphate. Functionally, catalyzes the attachment of alanine to tRNA(Ala) in a two-step reaction: alanine is first activated by ATP to form Ala-AMP and then transferred to the acceptor end of tRNA(Ala). Also edits incorrectly charged Ser-tRNA(Ala) and Gly-tRNA(Ala) via its editing domain. This Sulfurovum sp. (strain NBC37-1) protein is Alanine--tRNA ligase.